A 1486-amino-acid polypeptide reads, in one-letter code: Chromosome partition protein MukB (1486 aa).

An ATP-binding site is contributed by 34–41 (GGNGAGKS). Coiled-coil stretches lie at residues 326–418 (LEAD…QYNQ), 444–480 (LETF…QAYQ), and 509–603 (RHLA…RAPV). A flexible hinge region spans residues 666-783 (PGGSEDQRLN…EVPLFGRAAR (118 aa)). 3 coiled-coil regions span residues 835–923 (EAEI…AKLE), 977–1115 (EMLS…TAKA), and 1209–1266 (VEAI…QNVS).

This sequence belongs to the SMC family. MukB subfamily. In terms of assembly, homodimerization via its hinge domain. Binds to DNA via its C-terminal region. Interacts, and probably forms a ternary complex, with MukE and MukF via its C-terminal region. The complex formation is stimulated by calcium or magnesium. Interacts with tubulin-related protein FtsZ.

Its subcellular location is the cytoplasm. The protein localises to the nucleoid. Its function is as follows. Plays a central role in chromosome condensation, segregation and cell cycle progression. Functions as a homodimer, which is essential for chromosome partition. Involved in negative DNA supercoiling in vivo, and by this means organize and compact chromosomes. May achieve or facilitate chromosome segregation by condensation DNA from both sides of a centrally located replisome during cell division. The chain is Chromosome partition protein MukB from Escherichia coli O157:H7.